A 306-amino-acid chain; its full sequence is tRNA dimethylallyltransferase (306 aa).

2 to 9 (GPTASGKT) lines the ATP pocket. 4 to 9 (TASGKT) serves as a coordination point for substrate. Interaction with substrate tRNA regions lie at residues 27-30 (DSVQ) and 152-156 (QRIVR).

The protein belongs to the IPP transferase family. Monomer. Mg(2+) is required as a cofactor.

The catalysed reaction is adenosine(37) in tRNA + dimethylallyl diphosphate = N(6)-dimethylallyladenosine(37) in tRNA + diphosphate. Catalyzes the transfer of a dimethylallyl group onto the adenine at position 37 in tRNAs that read codons beginning with uridine, leading to the formation of N6-(dimethylallyl)adenosine (i(6)A). This Magnetococcus marinus (strain ATCC BAA-1437 / JCM 17883 / MC-1) protein is tRNA dimethylallyltransferase.